A 298-amino-acid chain; its full sequence is MQLVIISGRSGSGKSIALQALEDLGYYAIDNLPASLMAPLIDELREGPPSRTHIAVSIDARNLPDALRRFPVLLEEIRGRGIQCQVVYLTADSRILLERYSATRRRHPLTRASEMTLAEAIEQEQTYLAPIRDIGDLVIDTSSLSVHELRGRIAEQVARHSGRHLTLTFESFGYKRGVPLDADMVFDARCLPNPYWDPQLRGFDGRDAQIVTFLEAYPDVRAMADDIRHWLERWLPAYLASNRSYLTVAVGCTGGQHRSVYLVEDLAHHFAQQMSGVRLRHRELGVQAALPEDGNAVS.

8–15 serves as a coordination point for ATP; it reads GRSGSGKS. 59 to 62 contacts GTP; that stretch reads DARN.

The protein belongs to the RapZ-like family.

In terms of biological role, displays ATPase and GTPase activities. The polypeptide is Nucleotide-binding protein Csal_2229 (Chromohalobacter salexigens (strain ATCC BAA-138 / DSM 3043 / CIP 106854 / NCIMB 13768 / 1H11)).